The primary structure comprises 328 residues: L-lactate dehydrogenase (328 aa).

NAD(+) is bound by residues Val-18, Glu-39, Lys-46, Tyr-71, and 85-86 (GA). Residues Gln-88 and Arg-94 each contribute to the substrate site. Residues Ser-107, 124–126 (AAN), and Ser-149 each bind NAD(+). 126-129 (NPVD) contacts substrate. 154-157 (DSAR) contributes to the substrate binding site. Beta-D-fructose 1,6-bisphosphate-binding residues include Arg-159 and His-174. His-181 serves as the catalytic Proton acceptor. Tyr-226 is modified (phosphotyrosine). Thr-235 is a substrate binding site.

It belongs to the LDH/MDH superfamily. LDH family. Homotetramer.

It is found in the cytoplasm. The catalysed reaction is (S)-lactate + NAD(+) = pyruvate + NADH + H(+). It functions in the pathway fermentation; pyruvate fermentation to lactate; (S)-lactate from pyruvate: step 1/1. With respect to regulation, allosterically activated by fructose 1,6-bisphosphate (FBP). Functionally, catalyzes the conversion of lactate to pyruvate. In Streptococcus pneumoniae (strain ATCC BAA-255 / R6), this protein is L-lactate dehydrogenase.